Consider the following 616-residue polypeptide: Sodium- and chloride-dependent transporter XTRP3 (616 aa).

A compositionally biased stretch (basic residues) spans 1–11; the sequence is MRLAIKRRASR. Residues 1 to 26 are disordered; it reads MRLAIKRRASRGQRPGPDEKRARDME. Residues 1-37 are Cytoplasmic-facing; the sequence is MRLAIKRRASRGQRPGPDEKRARDMEKARPQWGNPLQ. Basic and acidic residues predominate over residues 16-26; it reads GPDEKRARDME. Residues 38–58 form a helical membrane-spanning segment; that stretch reads FVFACISYAVGLGNVWRFPYL. The Extracellular portion of the chain corresponds to 59 to 66; the sequence is CQMYGGGS. A helical transmembrane segment spans residues 67–87; it reads FLVPYLIMLIVEGMPLLYLEL. Residues 88–103 are Cytoplasmic-facing; that stretch reads AVGQRMRQGSIGAWRT. A helical transmembrane segment spans residues 104–124; it reads ISPYLSGVGVASVVVSFFLSM. Residues 125 to 189 lie on the Extracellular side of the membrane; the sequence is YYNVINAWGF…ISPSIQENGG (65 aa). N155 carries N-linked (GlcNAc...) asparagine glycosylation. A helical transmembrane segment spans residues 190–210; the sequence is VQWEPALCLTLAWLMVYLCIL. Over 211–218 the chain is Cytoplasmic; the sequence is RGTESTGK. Residues 219–239 form a helical membrane-spanning segment; it reads VVYFTALMPYCVLIIYLVRGL. Over 240–265 the chain is Extracellular; it reads TLHGATNGLMYMFTPKIEQLANPKAW. The chain crosses the membrane as a helical span at residues 266 to 286; sequence INAATQIFFSLGLGFGSLIAF. Topologically, residues 287-300 are cytoplasmic; it reads ASYNEPSNDCQKHA. Residues 301–321 traverse the membrane as a helical segment; it reads VIVSVINSSTSIFASIVTFSI. Residues 322–413 lie on the Extracellular side of the membrane; the sequence is YGFKATFNYE…EAIKNMEVSQ (92 aa). N-linked (GlcNAc...) asparagine glycosylation occurs at N381. A helical transmembrane segment spans residues 414–434; it reads LWSVLYFFMLLMLGMGSMLGN. Over 435-455 the chain is Cytoplasmic; sequence TAAILTPLTDSKVISSYLPKE. A helical membrane pass occupies residues 456–476; it reads AISGLVCLINCAVGMVFTMEA. Residues 477–489 are Extracellular-facing; that stretch reads GNYWFDIFNDYAA. The helical transmembrane segment at 490–510 threads the bilayer; the sequence is TLSLLLIVLVETIAVCYVYGL. Residues 511-533 lie on the Cytoplasmic side of the membrane; the sequence is RRFESDLRAMTGRPLNWYWKAMW. Residues 534 to 554 form a helical membrane-spanning segment; it reads AFVSPLLIIGLFIFYLSDYIL. At 555 to 578 the chain is on the extracellular side; sequence TGTLQYQAWDATQGQLVTKDYPPH. A helical transmembrane segment spans residues 579–599; the sequence is ALAVIGLLVASSTMCIPLVAL. Residues 600-616 lie on the Cytoplasmic side of the membrane; sequence GTFIRNRLKRGGSSPVA.

The protein belongs to the sodium:neurotransmitter symporter (SNF) (TC 2.A.22) family. SLC6A20 subfamily. As to expression, highly expressed in epithelial cells of duodenum, jejunum, ileum, stomach, cecum, colon and kidney proximal tubule. Also expressed in the choroid plexus, microglia and meniges of the brain and in the ovary.

The protein resides in the apical cell membrane. The enzyme catalyses L-proline(out) + chloride(out) + 2 Na(+)(out) = L-proline(in) + chloride(in) + 2 Na(+)(in). It carries out the reaction 4-hydroxy-L-proline(out) + chloride(out) + 2 Na(+)(out) = 4-hydroxy-L-proline(in) + chloride(in) + 2 Na(+)(in). The catalysed reaction is 2-methyl-2-(methylamino)propanoate(out) + chloride(out) + 2 Na(+)(out) = 2-methyl-2-(methylamino)propanoate(in) + chloride(in) + 2 Na(+)(in). It catalyses the reaction L-pipecolate(out) + chloride(out) + 2 Na(+)(out) = L-pipecolate(in) + chloride(in) + 2 Na(+)(in). The enzyme catalyses glycine betaine(out) + chloride(out) + 2 Na(+)(out) = glycine betaine(in) + chloride(in) + 2 Na(+)(in). It carries out the reaction glycine(out) + chloride(out) + 2 Na(+)(out) = glycine(in) + chloride(in) + 2 Na(+)(in). Mediates the Na(+)- and Cl(-)-dependent uptake of imino acids such as L-proline, N-methyl-L-proline and pipecolate as well as N-methylated amino acids. Also transports glycine, regulates proline and glycine homeostasis in the brain playing a role in the modulation of NMDAR currents. The polypeptide is Sodium- and chloride-dependent transporter XTRP3 (Rattus norvegicus (Rat)).